We begin with the raw amino-acid sequence, 137 residues long: Altered inheritance of mitochondria protein 11 (137 aa).

A run of 2 helical transmembrane segments spans residues 20 to 37 (YGAA…SRAI) and 66 to 88 (LTYA…CWAL).

This sequence belongs to the AIM11 family.

Its subcellular location is the membrane. This Saccharomyces cerevisiae (strain RM11-1a) (Baker's yeast) protein is Altered inheritance of mitochondria protein 11 (AIM11).